A 586-amino-acid chain; its full sequence is Arginine--tRNA ligase (586 aa).

A 'HIGH' region motif is present at residues 127–137 (PNVAKEMHVGH).

Belongs to the class-I aminoacyl-tRNA synthetase family. As to quaternary structure, monomer.

The protein localises to the cytoplasm. It carries out the reaction tRNA(Arg) + L-arginine + ATP = L-arginyl-tRNA(Arg) + AMP + diphosphate. This chain is Arginine--tRNA ligase (argS), found in Streptomyces coelicolor (strain ATCC BAA-471 / A3(2) / M145).